The following is a 473-amino-acid chain: G2/mitotic-specific cyclin-1 (473 aa).

A compositionally biased stretch (polar residues) spans 1–12 (MGSRNIVQQQNR). Disordered regions lie at residues 1-23 (MGSRNIVQQQNRAEAAVPGAMKQ) and 134-155 (KEKPIEKEKAAEKSAKKKAPTL). Residues 134–147 (KEKPIEKEKAAEKS) are compositionally biased toward basic and acidic residues.

This sequence belongs to the cyclin family. Cyclin AB subfamily. In terms of assembly, interacts with the CDC2 and CDK2 protein kinases to form a serine/threonine kinase holoenzyme complex. The cyclin subunit imparts substrate specificity to the complex.

Essential for the control of the cell cycle at the G2/M (mitosis) transition. G2/M cyclins accumulate steadily during G2 and are abruptly destroyed at mitosis. This chain is G2/mitotic-specific cyclin-1, found in Antirrhinum majus (Garden snapdragon).